Consider the following 257-residue polypeptide: Imidazole glycerol phosphate synthase subunit HisF (257 aa).

Active-site residues include Asp11 and Asp130.

This sequence belongs to the HisA/HisF family. As to quaternary structure, heterodimer of HisH and HisF.

Its subcellular location is the cytoplasm. The enzyme catalyses 5-[(5-phospho-1-deoxy-D-ribulos-1-ylimino)methylamino]-1-(5-phospho-beta-D-ribosyl)imidazole-4-carboxamide + L-glutamine = D-erythro-1-(imidazol-4-yl)glycerol 3-phosphate + 5-amino-1-(5-phospho-beta-D-ribosyl)imidazole-4-carboxamide + L-glutamate + H(+). It functions in the pathway amino-acid biosynthesis; L-histidine biosynthesis; L-histidine from 5-phospho-alpha-D-ribose 1-diphosphate: step 5/9. IGPS catalyzes the conversion of PRFAR and glutamine to IGP, AICAR and glutamate. The HisF subunit catalyzes the cyclization activity that produces IGP and AICAR from PRFAR using the ammonia provided by the HisH subunit. The polypeptide is Imidazole glycerol phosphate synthase subunit HisF (Shewanella sp. (strain MR-4)).